The chain runs to 397 residues: Phosphoglycerate kinase (397 aa).

Residues 21 to 23, Arg36, 59 to 62, Arg119, and Arg152 each bind substrate; these read DVN and HFGR. ATP is bound by residues Lys202, Glu324, and 354–357; that span reads GGDT.

Belongs to the phosphoglycerate kinase family. In terms of assembly, monomer.

The protein localises to the cytoplasm. It catalyses the reaction (2R)-3-phosphoglycerate + ATP = (2R)-3-phospho-glyceroyl phosphate + ADP. Its pathway is carbohydrate degradation; glycolysis; pyruvate from D-glyceraldehyde 3-phosphate: step 2/5. This chain is Phosphoglycerate kinase, found in Cereibacter sphaeroides (strain KD131 / KCTC 12085) (Rhodobacter sphaeroides).